The chain runs to 318 residues: Small ribosomal subunit protein uS2 (318 aa).

The protein belongs to the universal ribosomal protein uS2 family.

The protein is Small ribosomal subunit protein uS2 of Mesomycoplasma hyopneumoniae (strain J / ATCC 25934 / NCTC 10110) (Mycoplasma hyopneumoniae).